The primary structure comprises 535 residues: Sodium channel protein Nach (535 aa).

The Cytoplasmic portion of the chain corresponds to Met1–Lys49. The chain crosses the membrane as a helical span at residues Ile50–Ala70. Residues Arg71–Ser471 are Extracellular-facing. N-linked (GlcNAc...) asparagine glycans are attached at residues Asn165, Asn239, and Asn367. Residues Leu472–Leu492 traverse the membrane as a helical segment. The Cytoplasmic portion of the chain corresponds to Arg493 to Ser535.

This sequence belongs to the amiloride-sensitive sodium channel (TC 1.A.6) family. In terms of tissue distribution, embryonic and larval tracheal system; dorsal trunk (but not at fusion with transverse connective), several branches and terminal cells. Also expressed in adult tracheal system; dorsal trunk, but not at the spiracles.

Its subcellular location is the membrane. Functionally, part of a complex that plays a role in tracheal liquid clearance. Probable role in sodium transport. The chain is Sodium channel protein Nach (Nach) from Drosophila melanogaster (Fruit fly).